The sequence spans 860 residues: Leucine--tRNA ligase (860 aa).

A 'HIGH' region motif is present at residues 42-52 (PYPSGRLHMGH). Positions 619 to 623 (KMSKS) match the 'KMSKS' region motif. An ATP-binding site is contributed by K622.

The protein belongs to the class-I aminoacyl-tRNA synthetase family.

It localises to the cytoplasm. The catalysed reaction is tRNA(Leu) + L-leucine + ATP = L-leucyl-tRNA(Leu) + AMP + diphosphate. The chain is Leucine--tRNA ligase from Salmonella paratyphi A (strain ATCC 9150 / SARB42).